A 446-amino-acid polypeptide reads, in one-letter code: T-box transcription factor TBX20 (446 aa).

The segment at 50–80 is disordered; that stretch reads SCHPNLGDLPPLETHSDFSSGGGTGSGAPLC. Positions 108–287 form a DNA-binding region, T-box; the sequence is LWDKFHELGT…SNPFAKGFRD (180 aa).

The protein resides in the nucleus. Transcriptional regulator that may play a very early role in the differentiation of the cardiac precursors. The protein is T-box transcription factor TBX20 (tbx20) of Danio rerio (Zebrafish).